The primary structure comprises 188 residues: ATP synthase subunit b 2 (188 aa).

The disordered stretch occupies residues 1 to 23 (MAEGHGDANGATAHTAADGGHKA). Positions 8–18 (ANGATAHTAAD) are enriched in low complexity. Residues 37 to 57 (LVSLLIAFVALYLIVSKIALP) traverse the membrane as a helical segment.

This sequence belongs to the ATPase B chain family. In terms of assembly, F-type ATPases have 2 components, F(1) - the catalytic core - and F(0) - the membrane proton channel. F(1) has five subunits: alpha(3), beta(3), gamma(1), delta(1), epsilon(1). F(0) has three main subunits: a(1), b(2) and c(10-14). The alpha and beta chains form an alternating ring which encloses part of the gamma chain. F(1) is attached to F(0) by a central stalk formed by the gamma and epsilon chains, while a peripheral stalk is formed by the delta and b chains.

It is found in the cell inner membrane. Its function is as follows. F(1)F(0) ATP synthase produces ATP from ADP in the presence of a proton or sodium gradient. F-type ATPases consist of two structural domains, F(1) containing the extramembraneous catalytic core and F(0) containing the membrane proton channel, linked together by a central stalk and a peripheral stalk. During catalysis, ATP synthesis in the catalytic domain of F(1) is coupled via a rotary mechanism of the central stalk subunits to proton translocation. Component of the F(0) channel, it forms part of the peripheral stalk, linking F(1) to F(0). The b'-subunit is a diverged and duplicated form of b found in plants and photosynthetic bacteria. The chain is ATP synthase subunit b 2 (atpF2) from Rhodopseudomonas palustris (strain BisB18).